We begin with the raw amino-acid sequence, 364 residues long: Chorismate synthase (364 aa).

Positions 41 to 60 (MQHDLDRRRPGTSRYTTARR) are disordered. 2 residues coordinate NADP(+): R48 and R54. FMN is bound by residues 125–127 (RSS), 238–239 (NA), G278, 293–297 (KPTSS), and R319.

Belongs to the chorismate synthase family. Homotetramer. The cofactor is FMNH2.

It catalyses the reaction 5-O-(1-carboxyvinyl)-3-phosphoshikimate = chorismate + phosphate. The protein operates within metabolic intermediate biosynthesis; chorismate biosynthesis; chorismate from D-erythrose 4-phosphate and phosphoenolpyruvate: step 7/7. Functionally, catalyzes the anti-1,4-elimination of the C-3 phosphate and the C-6 proR hydrogen from 5-enolpyruvylshikimate-3-phosphate (EPSP) to yield chorismate, which is the branch point compound that serves as the starting substrate for the three terminal pathways of aromatic amino acid biosynthesis. This reaction introduces a second double bond into the aromatic ring system. This Shewanella baltica (strain OS223) protein is Chorismate synthase.